We begin with the raw amino-acid sequence, 361 residues long: Queuine tRNA-ribosyltransferase (361 aa).

The Proton acceptor role is filled by aspartate 92. Substrate contacts are provided by residues 92 to 96 (DSGGF), aspartate 146, glutamine 189, and glycine 216. Residues 247–253 (GVGKPAD) are RNA binding. The Nucleophile role is filled by aspartate 266. Positions 271–275 (TRSGR) are RNA binding; important for wobble base 34 recognition. Positions 304, 306, 309, and 335 each coordinate Zn(2+).

Belongs to the queuine tRNA-ribosyltransferase family. In terms of assembly, homodimer. Within each dimer, one monomer is responsible for RNA recognition and catalysis, while the other monomer binds to the replacement base PreQ1. Zn(2+) is required as a cofactor.

The enzyme catalyses 7-aminomethyl-7-carbaguanine + guanosine(34) in tRNA = 7-aminomethyl-7-carbaguanosine(34) in tRNA + guanine. It participates in tRNA modification; tRNA-queuosine biosynthesis. Catalyzes the base-exchange of a guanine (G) residue with the queuine precursor 7-aminomethyl-7-deazaguanine (PreQ1) at position 34 (anticodon wobble position) in tRNAs with GU(N) anticodons (tRNA-Asp, -Asn, -His and -Tyr). Catalysis occurs through a double-displacement mechanism. The nucleophile active site attacks the C1' of nucleotide 34 to detach the guanine base from the RNA, forming a covalent enzyme-RNA intermediate. The proton acceptor active site deprotonates the incoming PreQ1, allowing a nucleophilic attack on the C1' of the ribose to form the product. After dissociation, two additional enzymatic reactions on the tRNA convert PreQ1 to queuine (Q), resulting in the hypermodified nucleoside queuosine (7-(((4,5-cis-dihydroxy-2-cyclopenten-1-yl)amino)methyl)-7-deazaguanosine). In Rickettsia akari (strain Hartford), this protein is Queuine tRNA-ribosyltransferase.